Reading from the N-terminus, the 486-residue chain is Serine/threonine-protein kinase 33 (486 aa).

Positions 39-100 (VVEMSQTSST…WGRGNFTEGK (62 aa)) are disordered. Residues 41-53 (EMSQTSSTGSSEF) are compositionally biased toward polar residues. The segment covering 57-66 (PEKRKEKGAS) has biased composition (basic and acidic residues). Polar residues predominate over residues 68–80 (DVTSGKDSPSKSS). Positions 116–381 (YTFGRILGQG…AKELLDNQWL (266 aa)) constitute a Protein kinase domain. Residues 122 to 130 (LGQGSFGMV) and Lys145 each bind ATP. Asp238 acts as the Proton acceptor in catalysis. The interval 402–451 (KNNPESDEESTTDQRDSRSGQEESKVYQPSRNVPDVSNSSDEEEGKQVGR) is disordered. Ser407 bears the Phosphoserine mark. The span at 413–426 (TDQRDSRSGQEESK) shows a compositional bias: basic and acidic residues. A compositionally biased stretch (polar residues) spans 428 to 440 (YQPSRNVPDVSNS).

Belongs to the protein kinase superfamily. CAMK Ser/Thr protein kinase family. CaMK subfamily. Interacts with vimentin/VIM. Autophosphorylated.

It is found in the cytoplasm. The protein localises to the perinuclear region. The enzyme catalyses L-seryl-[protein] + ATP = O-phospho-L-seryl-[protein] + ADP + H(+). The catalysed reaction is L-threonyl-[protein] + ATP = O-phospho-L-threonyl-[protein] + ADP + H(+). Functionally, serine/threonine protein kinase which phosphorylates vimentin/VIM. Therefore may play a specific role in the dynamic behavior of the intermediate filament cytoskeleton. This is Serine/threonine-protein kinase 33 (STK33) from Bos taurus (Bovine).